A 145-amino-acid polypeptide reads, in one-letter code: Class I hydrophobin rodE (145 aa).

Disulfide bonds link Cys43–Cys126, Cys59–Cys120, Cys60–Cys95, and Cys127–Cys140.

Belongs to the fungal hydrophobin family. As to quaternary structure, self-assembles to form functional amyloid fibrils called rodlets. Self-assembly into fibrillar rodlets occurs spontaneously at hydrophobic:hydrophilic interfaces and the rodlets further associate laterally to form amphipathic monolayers.

Aerial growth, conidiation, and dispersal of filamentous fungi in the environment rely upon a capability of their secreting small amphipathic proteins called hydrophobins (HPBs) with low sequence identity. Class I can self-assemble into an outermost layer of rodlet bundles on aerial cell surfaces, conferring cellular hydrophobicity that supports fungal growth, development and dispersal; whereas Class II form highly ordered films at water-air interfaces through intermolecular interactions but contribute nothing to the rodlet structure. RodE is a class I hydrophobin that, unlike rodA, is not required for rodlet formation. In Aspergillus fumigatus (strain ATCC MYA-4609 / CBS 101355 / FGSC A1100 / Af293) (Neosartorya fumigata), this protein is Class I hydrophobin rodE.